The primary structure comprises 164 residues: Outer membrane protein assembly factor BamE (164 aa).

The first 19 residues, 1 to 19 (MHAFFPRLLLLLLFLPLTH), serve as a signal peptide directing secretion. Residues 111-164 (PAFSESEPAQNFFSPEQTFTPAPDTDSNMNEEPDKKGTVNFLKENQTNFYKDNQ) form a disordered region. Polar residues-rich tracts occupy residues 117-140 (EPAQ…SNMN) and 153-164 (KENQTNFYKDNQ).

The protein belongs to the BamE family. In terms of assembly, part of the Bam complex.

It is found in the cell outer membrane. In terms of biological role, part of the outer membrane protein assembly complex, which is involved in assembly and insertion of beta-barrel proteins into the outer membrane. In Nitrosomonas europaea (strain ATCC 19718 / CIP 103999 / KCTC 2705 / NBRC 14298), this protein is Outer membrane protein assembly factor BamE.